The primary structure comprises 381 residues: DNA dC-&gt;dU-editing enzyme APOBEC-3G (381 aa).

Positions 1-62 are essential for cytoplasmic localization; the sequence is MKPQTRNTVV…ANIFQGQVSF (62 aa). 2 CMP/dCMP-type deaminase domains span residues 29 to 143 and 211 to 325; these read HRNT…SQTG and GQHQ…LRRL. Thr32 carries the post-translational modification Phosphothreonine; by PKA. The Zn(2+) site is built by His67, Cys98, and Cys101. The segment at 206-333 is necessary for homooligomerization; that stretch reads DPSVLGQHQS…RLDRAGTPIS (128 aa). Residues 210–212 form an interaction with DNA region; that stretch reads LGQ. Residue His254 coordinates Zn(2+). Glu256 acts as the Proton donor in catalysis. Residues Cys285 and Cys288 each coordinate Zn(2+). Positions 310 to 317 are interaction with DNA; sequence RIYDYQRG.

This sequence belongs to the cytidine and deoxycytidylate deaminase family. In terms of assembly, homodimer. Homooligomer. Can bind RNA to form ribonucleoprotein complexes of high-molecular-mass (HMM) or low-molecular-mass (LMM). HMM is inactive and heterogeneous in protein composition because of binding nonselectively to cellular RNAs, which in turn are associated with variety of cellular proteins. The LMM form which is enzymatically active has few or no RNAs associated. Its ability to form homooligomer is distinct from its ability to assemble into HMM. Interacts with APOBEC3B, APOBEC3F, MOV10, AGO2, EIF4E, EIF4ENIF1, DCP2 and DDX6 in an RNA-dependent manner. Interacts with AGO1, AGO3 and PKA/PRKACA. The cofactor is Zn(2+).

Its subcellular location is the cytoplasm. It localises to the nucleus. The protein resides in the P-body. It carries out the reaction a 2'-deoxycytidine in single-stranded DNA + H2O + H(+) = a 2'-deoxyuridine in single-stranded DNA + NH4(+). Its function is as follows. DNA deaminase (cytidine deaminase) which acts as an inhibitor of retrovirus replication and retrotransposon mobility. After the penetration of retroviral nucleocapsids into target cells of infection and the initiation of reverse transcription, it can induce the conversion of cytosine to uracil in the minus-sense single-strand viral DNA, leading to G-to-A hypermutations in the subsequent plus-strand viral DNA. The resultant detrimental levels of mutations in the proviral genome, along with a deamination-independent mechanism that works prior to the proviral integration, together exert efficient antiretroviral effects in infected target cells. Selectively targets single-stranded DNA and does not deaminate double-stranded DNA or single- or double-stranded RNA. In Lagothrix lagotricha (Brown woolly monkey), this protein is DNA dC-&gt;dU-editing enzyme APOBEC-3G (APOBEC3G).